The sequence spans 263 residues: Probable HTH-type transcriptional regulator ArcR (263 aa).

The HTH iclR-type domain occupies 14–74 (ITSVLNAVEI…DGDGTYQLGD (61 aa)). Residues 35 to 54 (LQELTTELDLTKATIHTYMA) constitute a DNA-binding region (H-T-H motif). The IclR-ED domain occupies 89 to 262 (LYRLGREEID…ANIIEVRLET (174 aa)).

Functionally, probably regulates transcription of the arcABC operon. The polypeptide is Probable HTH-type transcriptional regulator ArcR (arcR) (Halobacterium salinarum (strain ATCC 29341 / DSM 671 / R1)).